We begin with the raw amino-acid sequence, 69 residues long: Atypical cationic antimicrobial peptide (69 aa).

The first 22 residues, 1 to 22, serve as a signal peptide directing secretion; the sequence is MAFLKKSLFLVLFLGLVSLSIC. Positions 23–45 are excised as a propeptide; it reads DEEKRENEDEENQEDDEQSEMRR. Residues 25–45 are disordered; that stretch reads EKRENEDEENQEDDEQSEMRR. Residues 30-40 show a composition bias toward acidic residues; it reads EDEENQEDDEQ.

This sequence belongs to the frog skin active peptide (FSAP) family. As to quaternary structure, monomer and/or weakly self-associated, oligomer, and amyloid-like fibril. Can adopt a monomeric nonamphipathic alpha-helical conformation, possibly with the aid of its cationic N- and C-termini, when bound to anionic membranes. Forms stable and ordered beta-sheet aggregates in aqueous environment or when bound to anionic or zwitterionic phospholipid vesicles. Expressed by the skin glands.

The protein resides in the secreted. Its subcellular location is the target cell membrane. Atypical cationic antimicrobial peptide with potent activity against Gram-negative and Gram-positive bacteria. Acts by inducing permeabilization of bacterial membrane. In vitro, also shows chemoattractant activity, which is mediated through a G protein-coupled receptor (probably FPR2 coupled to the ERK1/2 MAPK kinase pathway). Has slow-kinetic self-association and amyloid-like properties that modulate its activity. The soluble, weakly self-associated forms act on leukocytes to promote chemotaxis but have low antibacterial activity, the oligomers exhibit potent antimicrobial activity, whereas the amyloid-like fibrils have a very weak antibacterial activity. The membrane composition has a great influence on the peptide behavior. The peptide induces membrane leakage and insertion to a lesser extent in model membranes of the anionic lipid phosphatidylglycerol (PG) than in the model membranes of the zwitterionic lipid phosphatidylcholine (PC) vesicles. It forms more fibrils in PC than in PG. Membrane perturbations are more observed in the presence of PG than in the presence of PC. The peptide shows low hemolytic activity. This Phyllomedusa sauvagei (Sauvage's leaf frog) protein is Atypical cationic antimicrobial peptide.